We begin with the raw amino-acid sequence, 1379 residues long: MLNSLYSGNRLRVDFSNVAKEIDVPNLLQLQKKSFDHFLNLDNSQTESGIEKVFKSIFPIHDPQNRLTLEYVSSEISKPRYTVRECMERGLTYCVNLKIKIRLIVHDRDEKTSEKVGVKDIKEQEIFVREIPLMTDRISFIINGVERVVVNQLHRSPGVIFKEEESPTVVNKLIYTAQIIPDRGSWLYFEYDTKDVLYVRINKRRKVPITILFRALGYKKQDIVKLFYPIQTLNIKNNKFLTMFNPDDFSGRVDYDIKDEDGNILHQAGKRLTKKKADKLIEDGLKFVEYPIEVLVNRYLASPVIDKESGEVIYDTLTQLDENKLAKIVAEQNSIEIANDLASGVDDAIINSFLQDYETLKLLKQTEGLEDENDLAAIRIYKVMRPGEPVVKEAARTFVNDLFFNPERYDLTKVGRMKMNHKLGLSVPEYVTVLTNEDIIKTAKYLIKVKNGQGYIDDRDHLGNRRIRSIGELLANELHLGFVKMQKAIRDKFTSLSNNVDELMPYDLVNPKMITTTIMEFFTGGQLSQFMDQTNPLSEVTHKRRLSALGEGGLVKERAGFEVRDVHPTHYGRICPVETPEGQNIGLINTLSTYAKVNDLGFVESPYRRVIDGKVTNEIVYLTATQEEGHIIAPASTVLDANDIIKEDLIEVRRDGEMLLAKREDVTLIDLCSGMVMGVAASLIPFLEHDDANRALMGSNMQRQAVPLLRSTAPIVGTGMEAIVARDAWEAIKAKRGGVIEKVDNRNIFILGEDENGPYIDQYTMEKNLRTNQNTTFSQHPIVKKGDMVKSGQIIADGSSMEKGELAIGKNALIAFMPWNGYNYEDAIVMSERMIRADAFTSVHIYEKEIEARELKDGVEEITRDIPNMKEEDLMHLDESGIVKIGTHIKPGMILVGKVSPKGEVKPTPEERLLRAIFGEKAGHVVNKSLYAGASLEGVVIDVKIFTKKGYEKDARSFKAYEDEKNILEKEHHDRLLMLDREEMLRVTALLSKNPLESELEIGKNSYKKGDKIKRSDLDNVNRFTLNTYVKCFSKEIQKTYEDMKAYFQNEKKKLKDEHDAKLEILEKDDILPSGVVKLVKVYLATKRKLKVGDKMAGRHGNKGIVSNIVPDVDMPYLPNGRTVDIVLNPLGVPSRMNIGQILESHLGLVGMKLGEQIEEIFENKKAEWIKELRAKMTEIADVSRLMDAKAILSKIDDDKLIDYARDWASGVRFATPIFEGVKADEFKKLFEMAKIDMDGKTELYDGRTGSKMAERVNVGCMYMLKLHHLVDEKVHARSTGPYSLVTQQPVGGKALSGGQRFGEMEVWALEAYGAAHTLREMLTVKSDDVEGRLAAYKALTRGENVPSTGIPETFFVLTNELKSLALDVEIYDEEENNE.

This sequence belongs to the RNA polymerase beta chain family. The RNAP catalytic core consists of 2 alpha, 1 beta, 1 beta' and 1 omega subunit. When a sigma factor is associated with the core the holoenzyme is formed, which can initiate transcription.

The catalysed reaction is RNA(n) + a ribonucleoside 5'-triphosphate = RNA(n+1) + diphosphate. Its function is as follows. DNA-dependent RNA polymerase catalyzes the transcription of DNA into RNA using the four ribonucleoside triphosphates as substrates. This chain is DNA-directed RNA polymerase subunit beta, found in Campylobacter fetus subsp. fetus (strain 82-40).